A 297-amino-acid polypeptide reads, in one-letter code: Probable endonuclease 4 (297 aa).

Zn(2+) contacts are provided by His69, His110, Glu145, Asp179, His182, His214, Asp227, His229, and Glu259.

This sequence belongs to the AP endonuclease 2 family. The cofactor is Zn(2+).

The enzyme catalyses Endonucleolytic cleavage to 5'-phosphooligonucleotide end-products.. In terms of biological role, endonuclease IV plays a role in DNA repair. It cleaves phosphodiester bonds at apurinic or apyrimidinic (AP) sites, generating a 3'-hydroxyl group and a 5'-terminal sugar phosphate. The chain is Probable endonuclease 4 from Listeria welshimeri serovar 6b (strain ATCC 35897 / DSM 20650 / CCUG 15529 / CIP 8149 / NCTC 11857 / SLCC 5334 / V8).